We begin with the raw amino-acid sequence, 416 residues long: Proline-serine-threonine phosphatase-interacting protein 1 (416 aa).

The F-BAR domain occupies 5–264 (LQFKDAFWCR…TLEGCSIDAD (260 aa)). Positions 166–212 (HQKQVEKSQNKARQCKDSATEAERVYRQSIAQLEKVRAEWEQEHRTT) form a coiled coil. The residue at position 318 (Ser318) is a Phosphoserine. At Tyr345 the chain carries Phosphotyrosine. The SH3 domain occupies 359–416 (SPAQEYRALYDYTAQNPDELDLSAGDILEVILEGEDGWWTVERNGQRGFVPGSYLEKL).

In terms of assembly, homodimer. Homotrimer. Interacts (via coiled-coil domain) with CD2AP, PTPN12 and PTPN18. Interacts (via SH3 domain) with ABL1 and WAS. Interacts (via SH3 and coiled-coil domains) with MEFV (via B-box zinc finger); the interaction allows binding of MEFV to PYCARD and facilitates formation of PYCARD pyroptosomes. Interacts with CD2, DNM2 and FASLG. In terms of processing, dephosphorylated on Tyr-345 by PTPN18, this event negatively regulates the association of PSTPIP1 with SH2 domain-containing proteins as tyrosine kinase. Phosphorylation of Tyr-345 is probably required for subsequent phosphorylation at other tyrosine residues. Phosphorylation is induced by activation of the EGFR and PDGFR in a ABL1 dependent manner. The phosphorylation regulates the interaction with WAS and with MEFV. As to expression, highly expressed in the peripheral blood leukocytes, granulocytes and monocytes, namely in T-cells and natural killer cells, and in spleen. Weakly expressed in the thymus, small intestine, lung and placenta.

The protein resides in the cytoplasm. Its subcellular location is the cell membrane. It localises to the cell projection. The protein localises to the uropodium. It is found in the cytoskeleton. The protein resides in the perinuclear region. Its subcellular location is the lamellipodium. It localises to the cleavage furrow. Involved in regulation of the actin cytoskeleton. May regulate WAS actin-bundling activity. Bridges the interaction between ABL1 and PTPN18 leading to ABL1 dephosphorylation. May play a role as a scaffold protein between PTPN12 and WAS and allow PTPN12 to dephosphorylate WAS. Has the potential to physically couple CD2 and CD2AP to WAS. Acts downstream of CD2 and CD2AP to recruit WAS to the T-cell:APC contact site so as to promote the actin polymerization required for synapse induction during T-cell activation. Down-regulates CD2-stimulated adhesion through the coupling of PTPN12 to CD2. Also has a role in innate immunity and the inflammatory response. Recruited to inflammasomes by MEFV. Induces formation of pyroptosomes, large supramolecular structures composed of oligomerized PYCARD dimers which form prior to inflammatory apoptosis. Binding to MEFV allows MEFV to bind to PYCARD and facilitates pyroptosome formation. Regulates endocytosis and cell migration in neutrophils. In Homo sapiens (Human), this protein is Proline-serine-threonine phosphatase-interacting protein 1 (PSTPIP1).